The primary structure comprises 248 residues: Probable transcriptional regulatory protein Avi_3631 (248 aa).

The protein belongs to the TACO1 family.

The protein localises to the cytoplasm. In Allorhizobium ampelinum (strain ATCC BAA-846 / DSM 112012 / S4) (Agrobacterium vitis (strain S4)), this protein is Probable transcriptional regulatory protein Avi_3631.